Consider the following 130-residue polypeptide: DNA-directed RNA polymerase subunit omega (130 aa).

2 disordered regions span residues 79 to 98 and 109 to 130; these read EPEP…VDAD and EEEL…EEDE.

This sequence belongs to the RNA polymerase subunit omega family. As to quaternary structure, the RNAP catalytic core consists of 2 alpha, 1 beta, 1 beta' and 1 omega subunit. When a sigma factor is associated with the core the holoenzyme is formed, which can initiate transcription.

It catalyses the reaction RNA(n) + a ribonucleoside 5'-triphosphate = RNA(n+1) + diphosphate. Functionally, promotes RNA polymerase assembly. Latches the N- and C-terminal regions of the beta' subunit thereby facilitating its interaction with the beta and alpha subunits. The protein is DNA-directed RNA polymerase subunit omega (rpoZ) of Bradyrhizobium diazoefficiens (strain JCM 10833 / BCRC 13528 / IAM 13628 / NBRC 14792 / USDA 110).